We begin with the raw amino-acid sequence, 354 residues long: Ornithine cyclodeaminase (354 aa).

L-ornithine contacts are provided by arginine 53 and lysine 77. Residues threonine 92, arginine 120, 147–148, aspartate 169, threonine 209, 232–235, lysine 239, and serine 300 contribute to the NAD(+) site; these read AQ and VGGD. Arginine 120 provides a ligand contact to L-ornithine. Aspartate 235 is an L-ornithine binding site. Aspartate 235 serves as the catalytic Proton donor/acceptor. Valine 301 is a binding site for L-ornithine.

Belongs to the ornithine cyclodeaminase/mu-crystallin family. NAD(+) is required as a cofactor.

It catalyses the reaction L-ornithine = L-proline + NH4(+). It functions in the pathway amino-acid biosynthesis; L-proline biosynthesis; L-proline from L-ornithine: step 1/1. Its activity is regulated as follows. Is subject to substrate inhibition. Is regulated by L-arginine, which stimulates enzymatic activity at 0.1-1 mM while inhibits activity at higher concentrations, and has pronounced effects on the optima for pH and temperature and on the Km for L-ornithine. Is not inhibited by L-proline. Its function is as follows. Catalyzes the conversion of L-ornithine into L-proline with release of ammonia. Is involved in the utilization of nopaline, a catabolic pathway that proceeds through L-arginine and L-ornithine to L-proline. Nopaline is a predominant opine in plant cells transformed with Ti plasmid pTiC58. This Agrobacterium fabrum (strain C58 / ATCC 33970) (Agrobacterium tumefaciens (strain C58)) protein is Ornithine cyclodeaminase.